A 302-amino-acid chain; its full sequence is Glutamate/aspartate import solute-binding protein (302 aa).

The first 22 residues, 1–22, serve as a signal peptide directing secretion; it reads MQLRKPATAILALALSAGLAQA.

The protein belongs to the bacterial solute-binding protein 3 family. As to quaternary structure, the complex is composed of two ATP-binding proteins (GltL), two transmembrane proteins (GltJ and GltK) and a solute-binding protein (GltI).

It localises to the periplasm. Part of the ABC transporter complex GltIJKL involved in glutamate and aspartate uptake. Binds to both glutamate and aspartate. The protein is Glutamate/aspartate import solute-binding protein (gltI) of Escherichia coli (strain K12).